The following is a 173-amino-acid chain: Protein-export protein SecB (173 aa).

The disordered stretch occupies residues 148–173; that stretch reads QQQKQRREQGTSDSAPSGSPDNGGRQ. Residues 158–167 show a composition bias toward polar residues; that stretch reads TSDSAPSGSP.

Belongs to the SecB family. In terms of assembly, homotetramer, a dimer of dimers. One homotetramer interacts with 1 SecA dimer.

Its subcellular location is the cytoplasm. Its function is as follows. One of the proteins required for the normal export of preproteins out of the cell cytoplasm. It is a molecular chaperone that binds to a subset of precursor proteins, maintaining them in a translocation-competent state. It also specifically binds to its receptor SecA. This is Protein-export protein SecB from Halorhodospira halophila (strain DSM 244 / SL1) (Ectothiorhodospira halophila (strain DSM 244 / SL1)).